A 61-amino-acid polypeptide reads, in one-letter code: [Thr6]-bradykinyl-Val,Asp (61 aa).

A signal peptide spans 1–22 (MSFLKKSLFLVLFLGFVSFSIC). Residues 23 to 50 (EEEKREDEEEENEREENKESEEKRNQEE) constitute a propeptide that is removed on maturation. A disordered region spans residues 24–61 (EEKREDEEEENEREENKESEEKRNQEERPPGFTPFRVD). A compositionally biased stretch (acidic residues) spans 26–36 (KREDEEEENER). Positions 37–52 (EENKESEEKRNQEERP) are enriched in basic and acidic residues. The residue at position 53 (Pro-53) is a 4-hydroxyproline; in form [Hyp3,Thr6]-bradykinyl-Val,Asp and [Hyp3,Thr6]-bradykinin.

It belongs to the frog skin active peptide (FSAP) family. Bradykinin-related peptide subfamily. Expressed by the skin glands.

The protein localises to the secreted. Functionally, induces relaxation of rat smooth muscle from tail artery (EC(50)=16.8 nM) and contraction of that from ileum (EC(50)=205 nM), urinary bladder (EC(50)=895 nM) and uterus (EC(50)=60.3 nM). Binds to both bradykinin receptor B1 (BDKRB1) and B2 (BDKRB2). [Hyp3,Thr6]-bradykinin: Induces relaxation of rat smooth muscle from tail artery (EC(50)=56.7 nM) and contraction of that from ileum (EC(50)=588 nM), urinary bladder (EC(50)=4.6 uM) and uterus (EC(50)=3.9 nM). Binds to both bradykinin receptor B1 (BDKRB1) and B2 (BDKRB2). In arterial smooth muscle, the effect via BDKRB1 is stronger, in uterus, ileum and urinary bladder the effect via BDKRB2. In terms of biological role, induces relaxation of rat smooth muscle from tail artery (EC(50)=10.8 nM) and contraction of that from ileum (EC(50)=645 nM), urinary bladder (EC(50)=1.1 uM) and uterus (EC(50)=1.2 uM). Binds to both bradykinin receptor B1 (BDKRB1) and B2 (BDKRB2). Apart from uterus smooth muscle, the effect via BDKRB2 is stronger. Its function is as follows. [Hyp3,Thr6]-bradykinyl-Val,Asp: Induces relaxation of rat smooth muscle from tail artery (EC(50)=3.5 nM) and contraction of that from ileum (EC(50)=223 nM), urinary bladder (EC(50)=1.5 uM) and uterus (EC(50)=356 nM). Binds to both bradykinin receptor B1 (BDKRB1) and B2 (BDKRB2); the effects via BDKRB2 are stronger. In Agalychnis dacnicolor (Giant Mexican leaf frog), this protein is [Thr6]-bradykinyl-Val,Asp.